The primary structure comprises 320 residues: Cytochrome c biogenesis protein CcsA (320 aa).

A run of 8 helical transmembrane segments spans residues Phe15 to Ile35, Lys43 to Ser63, Leu71 to Phe91, Leu98 to Leu118, Met143 to Ile163, Val224 to Asn244, Trp251 to Leu271, and Ala285 to Leu305.

This sequence belongs to the CcmF/CycK/Ccl1/NrfE/CcsA family. In terms of assembly, may interact with Ccs1.

The protein resides in the plastid. Its subcellular location is the chloroplast thylakoid membrane. Its function is as follows. Required during biogenesis of c-type cytochromes (cytochrome c6 and cytochrome f) at the step of heme attachment. The chain is Cytochrome c biogenesis protein CcsA from Panax ginseng (Korean ginseng).